The primary structure comprises 104 residues: DNA-directed RNA polymerase subunit omega (104 aa).

The segment at 60–104 (VIHPDPEGKREAVRRRAEEERLRKEEEERKIKEQIAKEKEEGEKI) is disordered. Over residues 63-104 (PDPEGKREAVRRRAEEERLRKEEEERKIKEQIAKEKEEGEKI) the composition is skewed to basic and acidic residues.

It belongs to the RNA polymerase subunit omega family. The RNAP catalytic core consists of 2 alpha, 1 beta, 1 beta' and 1 omega subunit. When a sigma factor is associated with the core the holoenzyme is formed, which can initiate transcription.

The enzyme catalyses RNA(n) + a ribonucleoside 5'-triphosphate = RNA(n+1) + diphosphate. Promotes RNA polymerase assembly. Latches the N- and C-terminal regions of the beta' subunit thereby facilitating its interaction with the beta and alpha subunits. The chain is DNA-directed RNA polymerase subunit omega from Streptococcus sanguinis (strain SK36).